The primary structure comprises 116 residues: Large ribosomal subunit protein bL19 (116 aa).

Belongs to the bacterial ribosomal protein bL19 family.

In terms of biological role, this protein is located at the 30S-50S ribosomal subunit interface and may play a role in the structure and function of the aminoacyl-tRNA binding site. This chain is Large ribosomal subunit protein bL19, found in Actinobacillus succinogenes (strain ATCC 55618 / DSM 22257 / CCUG 43843 / 130Z).